A 312-amino-acid chain; its full sequence is Malate dehydrogenase (312 aa).

Residues 7–13 and Asp-34 each bind NAD(+); that span reads GAAGGIG. Residues Arg-81 and Arg-87 each contribute to the substrate site. NAD(+) is bound by residues Asn-94 and 117–119; that span reads ITN. Substrate contacts are provided by Asn-119 and Arg-153. His-177 acts as the Proton acceptor in catalysis. Met-227 provides a ligand contact to NAD(+).

The protein belongs to the LDH/MDH superfamily. MDH type 1 family. In terms of assembly, homodimer.

The catalysed reaction is (S)-malate + NAD(+) = oxaloacetate + NADH + H(+). Functionally, catalyzes the reversible oxidation of malate to oxaloacetate. The protein is Malate dehydrogenase of Moritella marina (Vibrio marinus).